The following is a 491-amino-acid chain: Argininosuccinate lyase (491 aa).

Belongs to the lyase 1 family. Argininosuccinate lyase subfamily.

It is found in the cytoplasm. The catalysed reaction is 2-(N(omega)-L-arginino)succinate = fumarate + L-arginine. Its pathway is amino-acid biosynthesis; L-arginine biosynthesis; L-arginine from L-ornithine and carbamoyl phosphate: step 3/3. The chain is Argininosuccinate lyase from Methanosarcina mazei (strain ATCC BAA-159 / DSM 3647 / Goe1 / Go1 / JCM 11833 / OCM 88) (Methanosarcina frisia).